Reading from the N-terminus, the 255-residue chain is Putative cysteine-rich repeat secretory protein 27 (255 aa).

The N-terminal stretch at 1–26 is a signal peptide; that stretch reads MISKFGSVHILAVVAIQLLIIPSVSS. Gnk2-homologous domains follow at residues 33-135 and 141-252; these read YLHH…TINS and YEND…LYPF.

This sequence belongs to the cysteine-rich repeat secretory protein family.

It localises to the secreted. This Arabidopsis thaliana (Mouse-ear cress) protein is Putative cysteine-rich repeat secretory protein 27 (CRRSP27).